Consider the following 675-residue polypeptide: Dihydrolipoyllysine-residue acetyltransferase component of pyruvate dehydrogenase complex (675 aa).

Residues 2–77 (AFSVEMPELG…DVGGVIAIIG (76 aa)) form the Lipoyl-binding 1 domain. K43 is modified (N6-lipoyllysine). A disordered region spans residues 77–124 (GDADETPANEAPADEAPAPAEEEEPVKEEPKKEAAPEAPAATGAATDV). Composition is skewed to low complexity over residues 84 to 95 (ANEAPADEAPAP) and 112 to 124 (PEAPAATGAATDV). Positions 121–196 (ATDVEMPELG…DVGAVIARIG (76 aa)) constitute a Lipoyl-binding 2 domain. The residue at position 162 (K162) is an N6-lipoyllysine. The segment at 200 to 240 (AAAAPAEEEAAPAEEEEPVKEEPKKEAAPEAPAATGAATDV) is disordered. The span at 205–218 (AEEEAAPAEEEEPV) shows a compositional bias: acidic residues. Positions 237 to 312 (ATDVEMPELG…DVGAVIARIG (76 aa)) constitute a Lipoyl-binding 3 domain. K278 is subject to N6-lipoyllysine. A disordered region spans residues 316-368 (AAAAPAEEEAAPAEEEEPVKEEPKKEEPKKEEPKKEAATTPAAASATVSASGD). Over residues 321–334 (AEEEAAPAEEEEPV) the composition is skewed to acidic residues. Positions 335-352 (KEEPKKEEPKKEEPKKEA) are enriched in basic and acidic residues. The span at 353–366 (ATTPAAASATVSAS) shows a compositional bias: low complexity. The region spanning 372-409 (YVTPLVRKLAEKHGVDLNTVTGTGIGGRIRKQDVLAAA) is the Peripheral subunit-binding (PSBD) domain. Catalysis depends on residues H645 and D649.

The protein belongs to the 2-oxoacid dehydrogenase family. In terms of assembly, forms a 24-polypeptide structural core with octahedral symmetry. Part of an unusual ODH/PDH supercomplex, consisting of AceE (E1), AceF (E2), and Lpd (E3) together with OdhA (E1+E2). The cofactor is (R)-lipoate.

The catalysed reaction is N(6)-[(R)-dihydrolipoyl]-L-lysyl-[protein] + acetyl-CoA = N(6)-[(R)-S(8)-acetyldihydrolipoyl]-L-lysyl-[protein] + CoA. Its function is as follows. Is essential for both 2-oxoglutarate dehydrogenase (ODH) and pyruvate dehydrogenase (PDH) activities, but AceF has exclusively transacetylase (and no transsuccinylase) activity. The lipoyl residues required for ODH activity are likely provided by AceF. This is Dihydrolipoyllysine-residue acetyltransferase component of pyruvate dehydrogenase complex (aceF) from Corynebacterium glutamicum (strain ATCC 13032 / DSM 20300 / JCM 1318 / BCRC 11384 / CCUG 27702 / LMG 3730 / NBRC 12168 / NCIMB 10025 / NRRL B-2784 / 534).